The primary structure comprises 499 residues: Glutamate--tRNA ligase (499 aa).

The short motif at 12 to 22 (PSPTGHLHIGN) is the 'HIGH' region element. The 'KMSKS' region motif lies at 259–263 (KLSKR). ATP is bound at residue K262.

This sequence belongs to the class-I aminoacyl-tRNA synthetase family. Glutamate--tRNA ligase type 1 subfamily. As to quaternary structure, monomer.

The protein localises to the cytoplasm. It catalyses the reaction tRNA(Glu) + L-glutamate + ATP = L-glutamyl-tRNA(Glu) + AMP + diphosphate. Its function is as follows. Catalyzes the attachment of glutamate to tRNA(Glu) in a two-step reaction: glutamate is first activated by ATP to form Glu-AMP and then transferred to the acceptor end of tRNA(Glu). The polypeptide is Glutamate--tRNA ligase (Lactobacillus gasseri (strain ATCC 33323 / DSM 20243 / BCRC 14619 / CIP 102991 / JCM 1131 / KCTC 3163 / NCIMB 11718 / NCTC 13722 / AM63)).